The following is a 476-amino-acid chain: Bifunctional protein HldE (476 aa).

Positions 1–318 (MAQYSAEFKQ…ENAIHARPET (318 aa)) are ribokinase. Position 195–198 (195–198 (NMSE)) interacts with ATP. Residue aspartate 264 is part of the active site. Positions 344-476 (MTNGCFDILH…VIEKIKLLKD (133 aa)) are cytidylyltransferase.

The protein in the N-terminal section; belongs to the carbohydrate kinase PfkB family. This sequence in the C-terminal section; belongs to the cytidylyltransferase family. In terms of assembly, homodimer.

It catalyses the reaction D-glycero-beta-D-manno-heptose 7-phosphate + ATP = D-glycero-beta-D-manno-heptose 1,7-bisphosphate + ADP + H(+). It carries out the reaction D-glycero-beta-D-manno-heptose 1-phosphate + ATP + H(+) = ADP-D-glycero-beta-D-manno-heptose + diphosphate. Its pathway is nucleotide-sugar biosynthesis; ADP-L-glycero-beta-D-manno-heptose biosynthesis; ADP-L-glycero-beta-D-manno-heptose from D-glycero-beta-D-manno-heptose 7-phosphate: step 1/4. The protein operates within nucleotide-sugar biosynthesis; ADP-L-glycero-beta-D-manno-heptose biosynthesis; ADP-L-glycero-beta-D-manno-heptose from D-glycero-beta-D-manno-heptose 7-phosphate: step 3/4. Its function is as follows. Catalyzes the phosphorylation of D-glycero-D-manno-heptose 7-phosphate at the C-1 position to selectively form D-glycero-beta-D-manno-heptose-1,7-bisphosphate. Functionally, catalyzes the ADP transfer from ATP to D-glycero-beta-D-manno-heptose 1-phosphate, yielding ADP-D-glycero-beta-D-manno-heptose. This is Bifunctional protein HldE from Haemophilus influenzae (strain 86-028NP).